Consider the following 1275-residue polypeptide: Probable Rho-type GTPase-activating protein 2 (1275 aa).

Disordered regions lie at residues 118-146 (KYES…SPYE), 213-238 (NTKR…LKDS), 280-306 (SSFR…KDNN), and 335-365 (SSPR…SKSG). Polar residues predominate over residues 122–143 (TDSFPSSQPSRANSPQSDSYSS). Polar residues-rich tracts occupy residues 290–299 (TPFNSDSNIS) and 353–364 (PKHSTNNLSSKS). Serine 388 carries the phosphoserine modification. 2 disordered regions span residues 390-466 (IIEN…RSSF) and 539-561 (FSKS…SNSK). 2 stretches are compositionally biased toward polar residues: residues 450-466 (SLSL…RSSF) and 552-561 (QVEKSTSNSK). The 118-residue stretch at 719–836 (HAQKEGVLLK…WLRAILRQVP (118 aa)) folds into the PH domain. The segment covering 957–971 (ADTRRNQDAPEKHVP) has biased composition (basic and acidic residues). Disordered stretches follow at residues 957–988 (ADTR…TDQS) and 1254–1275 (NGAQ…NEFF). The region spanning 1065–1275 (LPLNEAVNIS…DDNGEDNEFF (211 aa)) is the Rho-GAP domain. Acidic residues predominate over residues 1260 to 1275 (SDSDVSDDNGEDNEFF).

The protein resides in the nucleus. GTPase-activating protein for Rho-type proteins. The chain is Probable Rho-type GTPase-activating protein 2 (rga2) from Schizosaccharomyces pombe (strain 972 / ATCC 24843) (Fission yeast).